The sequence spans 344 residues: Nuclear distribution protein nudE homolog 1 (344 aa).

The self-association stretch occupies residues 1 to 93 (MEDSGKTFES…MQHSEGYRQI (93 aa)). The stretch at 18 to 188 (WRDLAMTYKQ…ELAVQQKQDK (171 aa)) forms a coiled coil. An interaction with PAFAH1B1 region spans residues 88–156 (EGYRQISALE…ERNAFLESEL (69 aa)). The interval 167 to 290 (QRLKDEARDL…QSPSRTSGPA (124 aa)) is interaction with CENPF. The tract at residues 181-246 (AVQQKQDKPR…DSSTSGTPLT (66 aa)) is disordered. Serine 211 is subject to Phosphoserine. 2 positions are modified to phosphothreonine: threonine 215 and threonine 228. Serine 239 bears the Phosphoserine mark. Residues threonine 243 and threonine 246 each carry the phosphothreonine modification. The S-palmitoyl cysteine; by ZDHHC2, ZDHHC3 and ZDHHC7 moiety is linked to residue cysteine 274. Residues 279-289 (YDQSPSRTSGP) show a composition bias toward polar residues. The disordered stretch occupies residues 279-337 (YDQSPSRTSGPASGRGTKNRDGVDRRPGSTSVGDKGSGKRLEFGKPASEPASPALPSAQ). Position 282 is a phosphoserine (serine 282). Positions 296–305 (KNRDGVDRRP) are enriched in basic and acidic residues. Serine 309 is subject to Phosphoserine. A compositionally biased stretch (low complexity) spans 324–336 (PASEPASPALPSA).

Belongs to the nudE family. Homodimer. Interacts with dynactin and PCM1. Interacts with CENPF, LIS1, CNTRL, dynein, tubulin gamma, PAFAH1B1, PCNT, SLMAP and TCP1. Interacts with ZNF365. Interacts with RAB9A; the interaction leads to RAB9A-dynein motor tethering. Interacts (via C-terminus) with MCRS1 (via C-terminus); phosphorylation of NDE1 inhibits the interaction. Phosphorylated in mitosis. Phosphorylation at Thr-246 is essential for the G2/M transition. As to expression, highly expressed in ovary. Also expressed in brain, heart, kidney, large intestine, liver, lung, small intestine and testis.

It localises to the cytoplasm. The protein localises to the cytoskeleton. The protein resides in the microtubule organizing center. Its subcellular location is the centrosome. It is found in the spindle. It localises to the chromosome. The protein localises to the centromere. The protein resides in the kinetochore. Its subcellular location is the cleavage furrow. It is found in the cytoplasmic vesicle membrane. Its function is as follows. Required for centrosome duplication and formation and function of the mitotic spindle. Essential for the development of the cerebral cortex. May regulate the production of neurons by controlling the orientation of the mitotic spindle during division of cortical neuronal progenitors of the proliferative ventricular zone of the brain. Orientation of the division plane perpendicular to the layers of the cortex gives rise to two proliferative neuronal progenitors whereas parallel orientation of the division plane yields one proliferative neuronal progenitor and a postmitotic neuron. A premature shift towards a neuronal fate within the progenitor population may result in an overall reduction in the final number of neurons and an increase in the number of neurons in the deeper layers of the cortex. Acts as a RAB9A/B effector that tethers RAB9-associated late endosomes to the dynein motor for their retrograde transport to the trans-Golgi network. The polypeptide is Nuclear distribution protein nudE homolog 1 (Mus musculus (Mouse)).